The following is a 1524-amino-acid chain: DNA polymerase alpha catalytic subunit (1524 aa).

2 disordered regions span residues methionine 1 to isoleucine 53 and arginine 68 to proline 139. Basic and acidic residues predominate over residues serine 20–lysine 30. Residues glutamate 79–aspartate 96 are compositionally biased toward acidic residues. The Zn(2+) site is built by cysteine 1333, cysteine 1336, cysteine 1375, cysteine 1378, cysteine 1414, cysteine 1419, cysteine 1440, and cysteine 1446. Residues cysteine 1333–cysteine 1378 form a CysA-type zinc finger. The CysB motif motif lies at cysteine 1414–cysteine 1446.

It belongs to the DNA polymerase type-B family.

It localises to the nucleus. It catalyses the reaction DNA(n) + a 2'-deoxyribonucleoside 5'-triphosphate = DNA(n+1) + diphosphate. Polymerase alpha in a complex with DNA primase is a replicative polymerase. This is DNA polymerase alpha catalytic subunit (POLA) from Arabidopsis thaliana (Mouse-ear cress).